The sequence spans 921 residues: GID complex subunit 5 (921 aa).

Phosphoserine is present on Ser-226. ARM repeat units follow at residues 491–530 (VSAL…DFMK), 551–592 (SNLQ…RIAL), 617–656 (NEEK…NLTC), 683–725 (KISI…NLAA), and 729–777 (NKKQ…NLLW). Residues 822–867 (SRGKYYDEPDGDDSSSNANDDEDDDNDEGDDEGDEFVRTPAAKGST) are disordered. The segment covering 829–855 (EPDGDDSSSNANDDEDDDNDEGDDEGD) has biased composition (acidic residues).

It belongs to the VID28/GID5 family. As to quaternary structure, identified in the GID/CTLH complex. In the absence of stress, the complex exists as an inactive anticipatory complex (GID(Ant)), composed of VID30/GID1, the E3 ubiquitin-ligase RMD5/GID2, VID28/GID5, GID8, and the RING-like subunit FYV10/GID9, awaiting a substrate receptor to form the active E3 ligase complex. When cells are shifted to glucose-containing medium, the substrate receptor VID24/GID4 is induced and becomes part of the complex, named GID(SR4). Additionally, GID7 transforms the GID(SR4) E3 ligase core into a higher-order supramolecular assembly (Chelator-GID(SR4)) specifically tailored for FBP1 ubiquitination. Under osmotic or heat stress, the substrate receptor GID10 is induced and becomes part of the complex, named GID(SR10). Within the GID complex, interacts directly with RMD5/GID2 and FYV10/GID9, and recruits VID24/GID4 to the complex when cells are shifted to glucose-containing medium.

It is found in the nucleus. Its subcellular location is the cytoplasm. Its function is as follows. Component of the GID E3 ligase complex recruiting N termini and catalyzing ubiquitination of proteins targeted for degradation. GID E3 is regulated through assembly with interchangeable N-degron-binding substrate receptors induced by distinct environmental perturbations. Required for the adaptation to the presence of glucose in the growth medium; mediates in association with the substrate receptor VID24/GID4 the degradation of enzymes involved in gluconeogenesis when cells are shifted to glucose-containing medium. Required for proteasome-dependent catabolite degradation of fructose-1,6-bisphosphatase (FBP1), malate dehydrogenase (MDH2), and other gluconeogenic enzymes. The sequence is that of GID complex subunit 5 from Saccharomyces cerevisiae (strain ATCC 204508 / S288c) (Baker's yeast).